The following is a 78-amino-acid chain: Probable [Fe-S]-dependent transcriptional repressor (78 aa).

Iron-sulfur cluster contacts are provided by cysteine 56, cysteine 61, cysteine 64, and cysteine 70.

This sequence belongs to the FeoC family.

May function as a transcriptional regulator that controls feoABC expression. This is Probable [Fe-S]-dependent transcriptional repressor from Escherichia coli O7:K1 (strain IAI39 / ExPEC).